The chain runs to 343 residues: tRNA N6-adenosine threonylcarbamoyltransferase (343 aa).

Positions 115 and 119 each coordinate Fe cation. Residues 138–142, D171, G184, and N276 contribute to the substrate site; that span reads LVSGA. D304 contributes to the Fe cation binding site.

Belongs to the KAE1 / TsaD family. Fe(2+) is required as a cofactor.

The protein resides in the cytoplasm. The enzyme catalyses L-threonylcarbamoyladenylate + adenosine(37) in tRNA = N(6)-L-threonylcarbamoyladenosine(37) in tRNA + AMP + H(+). Functionally, required for the formation of a threonylcarbamoyl group on adenosine at position 37 (t(6)A37) in tRNAs that read codons beginning with adenine. Is involved in the transfer of the threonylcarbamoyl moiety of threonylcarbamoyl-AMP (TC-AMP) to the N6 group of A37, together with TsaE and TsaB. TsaD likely plays a direct catalytic role in this reaction. In Buchnera aphidicola subsp. Cinara cedri (strain Cc), this protein is tRNA N6-adenosine threonylcarbamoyltransferase.